Here is a 268-residue protein sequence, read N- to C-terminus: Interleukin-2 receptor subunit alpha (268 aa).

The first 21 residues, 1 to 21 (MEPRLLMLGFLSLTIVPSCRA), serve as a signal peptide directing secretion. The 58-residue stretch at 22–79 (ELCLYDPPEVPNATFKALSYKNGTILNCECKRGFRRLKELVYMRCLGNSWSSNCQCTS) folds into the Sushi 1 domain. Topologically, residues 22–236 (ELCLYDPPEV…ETFVLTMEYK (215 aa)) are extracellular. 3 disulfide bridges follow: Cys-24–Cys-66, Cys-49–Cys-75, and Cys-51–Cys-77. N-linked (GlcNAc...) asparagine glycosylation is found at Asn-33 and Asn-43. Residues 86–109 (RKQVTAQLEHQKEQQTTTDMQKPT) are disordered. Positions 88–109 (QVTAQLEHQKEQQTTTDMQKPT) are enriched in polar residues. N-linked (GlcNAc...) asparagine glycosylation occurs at Asn-116. A Sushi 2 domain is found at 119 to 182 (GHCREPPPWK…WTQPQLTCVD (64 aa)). Cystine bridges form between Cys-121–Cys-164 and Cys-148–Cys-180. The disordered stretch occupies residues 189–219 (FLASEESQGSRNSSPESETSCPITTTDFPQP). The span at 193–211 (EESQGSRNSSPESETSCPI) shows a compositional bias: polar residues. A helical transmembrane segment spans residues 237 to 257 (VAVASCLFLLISILLLSGLTW). The Cytoplasmic portion of the chain corresponds to 258 to 268 (QHRWRKSRRTI).

Non-covalent dimer of an alpha and a beta subunit. IL2R exists in 3 different forms: a high affinity dimer, an intermediate affinity monomer (beta subunit), and a low affinity monomer (alpha subunit). The high and intermediate affinity forms also associate with a gamma subunit.

The protein resides in the membrane. Functionally, receptor for interleukin-2. The receptor is involved in the regulation of immune tolerance by controlling regulatory T cells (TREGs) activity. TREGs suppress the activation and expansion of autoreactive T-cells. The chain is Interleukin-2 receptor subunit alpha (Il2ra) from Mus musculus (Mouse).